The sequence spans 416 residues: Phosphoribosylamine--glycine ligase (416 aa).

The 207-residue stretch at 107–313 (KDFMKKYNVK…FVDLINAAMD (207 aa)) folds into the ATP-grasp domain. 133–194 (LKKCTYPIVI…EEYLEGVEAS (62 aa)) contributes to the ATP binding site. Positions 283 and 285 each coordinate Mg(2+).

It belongs to the GARS family. Mg(2+) is required as a cofactor. Requires Mn(2+) as cofactor.

The enzyme catalyses 5-phospho-beta-D-ribosylamine + glycine + ATP = N(1)-(5-phospho-beta-D-ribosyl)glycinamide + ADP + phosphate + H(+). It participates in purine metabolism; IMP biosynthesis via de novo pathway; N(1)-(5-phospho-D-ribosyl)glycinamide from 5-phospho-alpha-D-ribose 1-diphosphate: step 2/2. The sequence is that of Phosphoribosylamine--glycine ligase from Clostridium acetobutylicum (strain ATCC 824 / DSM 792 / JCM 1419 / IAM 19013 / LMG 5710 / NBRC 13948 / NRRL B-527 / VKM B-1787 / 2291 / W).